Here is a 494-residue protein sequence, read N- to C-terminus: UPF0371 protein SUB1165 (494 aa).

It belongs to the UPF0371 family.

This chain is UPF0371 protein SUB1165, found in Streptococcus uberis (strain ATCC BAA-854 / 0140J).